We begin with the raw amino-acid sequence, 211 residues long: Large ribosomal subunit protein uL4 (211 aa).

A disordered region spans residues 48–89 (KRAGTASTKTRVEVRGGGAKPWRQKGTGRARAGSRTSPLWRG).

The protein belongs to the universal ribosomal protein uL4 family. As to quaternary structure, part of the 50S ribosomal subunit.

One of the primary rRNA binding proteins, this protein initially binds near the 5'-end of the 23S rRNA. It is important during the early stages of 50S assembly. It makes multiple contacts with different domains of the 23S rRNA in the assembled 50S subunit and ribosome. Functionally, forms part of the polypeptide exit tunnel. The protein is Large ribosomal subunit protein uL4 of Desulfotalea psychrophila (strain LSv54 / DSM 12343).